A 1590-amino-acid chain; its full sequence is Defective chorion protein, FC177 isoform (1590 aa).

A signal peptide spans Met-1–Gly-19. 3 disordered regions span residues Val-23–Asn-60, Ala-184–Pro-212, and Pro-268–Tyr-294. Positions Ala-32–Asp-41 are enriched in polar residues. Over residues Pro-268–Ala-280 the composition is skewed to low complexity. 5 tandem repeats follow at residues Gln-493–Gln-518, Gln-519–Gln-544, Gln-545–Gln-570, Gln-571–Gln-596, and Gln-597–Gln-622. Positions Gln-493 to Gln-788 are 12 X 26 AA approximate tandem repeats, Glu, Met-rich. Residues Gln-623–Gln-652 form a 6; approximate repeat. A 7; approximate repeat occupies Gln-653–Gln-680. The 8; approximate repeat unit spans residues Gln-681–Glu-696. Residues Asp-697–Gln-720 form a 9; approximate repeat. The stretch at Gln-721–Glu-733 is one 10; approximate repeat. An 11; approximate repeat occupies Asn-734–Gln-758. The 12; approximate repeat unit spans residues Gln-759–Gln-788. 6 disordered regions span residues Gly-843–Ala-875, Arg-944–Val-983, Glu-1119–Ile-1221, Pro-1261–Asn-1352, Phe-1375–Val-1515, and Glu-1538–Ala-1590. Positions Ser-957–Gln-977 are enriched in polar residues. Over residues Glu-1119–Glu-1130 the composition is skewed to acidic residues. A compositionally biased stretch (basic and acidic residues) spans Gln-1131–Val-1148. The segment covering Thr-1151 to Glu-1195 has biased composition (low complexity). Residues Gln-1205–Ile-1221 show a composition bias toward polar residues. The span at Glu-1272–Ala-1288 shows a compositional bias: basic and acidic residues. Residues Glu-1295–Ser-1306 are compositionally biased toward acidic residues. 2 stretches are compositionally biased toward low complexity: residues Thr-1307–Ser-1319 and Asp-1435–Pro-1452. Basic residues predominate over residues Gln-1493–Lys-1504. Positions Gln-1505–Val-1515 are enriched in low complexity. Residues Thr-1554–Lys-1576 are compositionally biased toward basic residues. The segment covering Ser-1577 to Ala-1590 has biased composition (polar residues).

It is found in the secreted. Functionally, required for proper assembly of the eggshell. This chain is Defective chorion protein, FC177 isoform, found in Drosophila melanogaster (Fruit fly).